The following is a 127-amino-acid chain: MSIPNHLRYSEEHEWVKTEGNQVVIGITHFAQSELGDIVFVELPEVGATLEANEPFGSVESVKTVSELYAPVSGKVVAVNEELSDQPELVNESPYEGAWMVKVELSDASEVEKLLTAEKYAEMTNQD.

Residues 22 to 104 enclose the Lipoyl-binding domain; it reads QVVIGITHFA…YEGAWMVKVE (83 aa). N6-lipoyllysine is present on Lys63.

This sequence belongs to the GcvH family. The glycine cleavage system is composed of four proteins: P, T, L and H. (R)-lipoate is required as a cofactor.

Functionally, the glycine cleavage system catalyzes the degradation of glycine. The H protein shuttles the methylamine group of glycine from the P protein to the T protein. Its function is as follows. Is also involved in protein lipoylation via its role as an octanoyl/lipoyl carrier protein intermediate. The sequence is that of Glycine cleavage system H protein from Bacillus cytotoxicus (strain DSM 22905 / CIP 110041 / 391-98 / NVH 391-98).